Reading from the N-terminus, the 154-residue chain is ATP synthase subunit b', chloroplastic (154 aa).

A helical transmembrane segment spans residues 22 to 42; sequence GTLPLIAIQFLILMFLLNILL.

This sequence belongs to the ATPase B chain family. As to quaternary structure, F-type ATPases have 2 components, F(1) - the catalytic core - and F(0) - the membrane proton channel. F(1) has five subunits: alpha(3), beta(3), gamma(1), delta(1), epsilon(1). F(0) has four main subunits: a(1), b(1), b'(1) and c(10-14). The alpha and beta chains form an alternating ring which encloses part of the gamma chain. F(1) is attached to F(0) by a central stalk formed by the gamma and epsilon chains, while a peripheral stalk is formed by the delta, b and b' chains.

The protein resides in the plastid. It is found in the chloroplast thylakoid membrane. F(1)F(0) ATP synthase produces ATP from ADP in the presence of a proton or sodium gradient. F-type ATPases consist of two structural domains, F(1) containing the extramembraneous catalytic core and F(0) containing the membrane proton channel, linked together by a central stalk and a peripheral stalk. During catalysis, ATP synthesis in the catalytic domain of F(1) is coupled via a rotary mechanism of the central stalk subunits to proton translocation. Functionally, component of the F(0) channel, it forms part of the peripheral stalk, linking F(1) to F(0). The b'-subunit is a diverged and duplicated form of b found in plants and photosynthetic bacteria. The protein is ATP synthase subunit b', chloroplastic of Vaucheria litorea (Yellow-green alga).